The chain runs to 311 residues: Alpha/beta hydrolase domain-containing protein 17C (311 aa).

The disordered stretch occupies residues 48–67; sequence EAPASTAQQPPREEGSGEPA. Residues S193, D258, and H287 each act as charge relay system in the active site.

Belongs to the AB hydrolase superfamily. ABHD17 family. Post-translationally, palmitoylated on cysteine residues located in a cysteine cluster at the N-terminus which promotes membrane localization.

The protein localises to the recycling endosome membrane. Its subcellular location is the cell projection. The protein resides in the dendritic spine. It is found in the postsynaptic density membrane. The enzyme catalyses S-hexadecanoyl-L-cysteinyl-[protein] + H2O = L-cysteinyl-[protein] + hexadecanoate + H(+). Functionally, hydrolyzes fatty acids from S-acylated cysteine residues in proteins. Has depalmitoylating activity towards NRAS. The protein is Alpha/beta hydrolase domain-containing protein 17C of Xenopus laevis (African clawed frog).